The chain runs to 117 residues: Large ribosomal subunit protein uL18 (117 aa).

This sequence belongs to the universal ribosomal protein uL18 family. As to quaternary structure, part of the 50S ribosomal subunit; part of the 5S rRNA/L5/L18/L25 subcomplex. Contacts the 5S and 23S rRNAs.

Functionally, this is one of the proteins that bind and probably mediate the attachment of the 5S RNA into the large ribosomal subunit, where it forms part of the central protuberance. The protein is Large ribosomal subunit protein uL18 of Coxiella burnetii (strain CbuK_Q154) (Coxiella burnetii (strain Q154)).